Here is a 570-residue protein sequence, read N- to C-terminus: Sulfite reductase [NADPH] hemoprotein beta-component (570 aa).

Residues cysteine 434, cysteine 440, cysteine 479, and cysteine 483 each contribute to the [4Fe-4S] cluster site. Cysteine 483 contributes to the siroheme binding site.

Belongs to the nitrite and sulfite reductase 4Fe-4S domain family. In terms of assembly, alpha(8)-beta(8). The alpha component is a flavoprotein, the beta component is a hemoprotein. It depends on siroheme as a cofactor. Requires [4Fe-4S] cluster as cofactor.

The catalysed reaction is hydrogen sulfide + 3 NADP(+) + 3 H2O = sulfite + 3 NADPH + 4 H(+). The protein operates within sulfur metabolism; hydrogen sulfide biosynthesis; hydrogen sulfide from sulfite (NADPH route): step 1/1. Component of the sulfite reductase complex that catalyzes the 6-electron reduction of sulfite to sulfide. This is one of several activities required for the biosynthesis of L-cysteine from sulfate. In Escherichia coli O17:K52:H18 (strain UMN026 / ExPEC), this protein is Sulfite reductase [NADPH] hemoprotein beta-component.